The primary structure comprises 106 residues: MVRILHWLIRFYQIAISPMLGPRCRYIPTCSQYSLEAIHTHGAMKGTWLAIHRVCRCHPWGGSGYDPVPPKAIRFISFQQIDSQMLHVTVPFRERLLNLNHSNHLG.

This sequence belongs to the UPF0161 family.

Its subcellular location is the cell inner membrane. Functionally, could be involved in insertion of integral membrane proteins into the membrane. The chain is Putative membrane protein insertion efficiency factor from Acinetobacter baylyi (strain ATCC 33305 / BD413 / ADP1).